The chain runs to 638 residues: Threonine--tRNA ligase (638 aa).

A TGS domain is found at 1 to 61 (MPIITLPDGS…NKDSKVVIIT (61 aa)). A catalytic region spans residues 242 to 533 (DHRKLGKKHS…LIEQYEAKFP (292 aa)). Zn(2+) is bound by residues C333, H384, and H510.

This sequence belongs to the class-II aminoacyl-tRNA synthetase family. In terms of assembly, homodimer. It depends on Zn(2+) as a cofactor.

The protein resides in the cytoplasm. It catalyses the reaction tRNA(Thr) + L-threonine + ATP = L-threonyl-tRNA(Thr) + AMP + diphosphate + H(+). Functionally, catalyzes the attachment of threonine to tRNA(Thr) in a two-step reaction: L-threonine is first activated by ATP to form Thr-AMP and then transferred to the acceptor end of tRNA(Thr). Also edits incorrectly charged L-seryl-tRNA(Thr). In Prochlorococcus marinus (strain AS9601), this protein is Threonine--tRNA ligase.